A 332-amino-acid polypeptide reads, in one-letter code: Biotin synthase (332 aa).

In terms of domain architecture, Radical SAM core spans 52 to 282 (FPENEVEFCS…KAELRLCGGR (231 aa)). The [4Fe-4S] cluster site is built by Cys-70, Cys-74, and Cys-77. [2Fe-2S] cluster-binding residues include Cys-114, Cys-147, Cys-207, and Arg-277.

The protein belongs to the radical SAM superfamily. Biotin synthase family. As to quaternary structure, homodimer. The cofactor is [4Fe-4S] cluster. [2Fe-2S] cluster serves as cofactor.

The catalysed reaction is (4R,5S)-dethiobiotin + (sulfur carrier)-SH + 2 reduced [2Fe-2S]-[ferredoxin] + 2 S-adenosyl-L-methionine = (sulfur carrier)-H + biotin + 2 5'-deoxyadenosine + 2 L-methionine + 2 oxidized [2Fe-2S]-[ferredoxin]. It functions in the pathway cofactor biosynthesis; biotin biosynthesis; biotin from 7,8-diaminononanoate: step 2/2. Catalyzes the conversion of dethiobiotin (DTB) to biotin by the insertion of a sulfur atom into dethiobiotin via a radical-based mechanism. The sequence is that of Biotin synthase from Aquifex aeolicus (strain VF5).